We begin with the raw amino-acid sequence, 321 residues long: Lipoyl synthase (321 aa).

The [4Fe-4S] cluster site is built by cysteine 68, cysteine 73, cysteine 79, cysteine 94, cysteine 98, cysteine 101, and serine 308. Residues 80–297 (FNHGTATFMI…KEVALELGFT (218 aa)) enclose the Radical SAM core domain.

It belongs to the radical SAM superfamily. Lipoyl synthase family. [4Fe-4S] cluster is required as a cofactor.

It is found in the cytoplasm. It carries out the reaction [[Fe-S] cluster scaffold protein carrying a second [4Fe-4S](2+) cluster] + N(6)-octanoyl-L-lysyl-[protein] + 2 oxidized [2Fe-2S]-[ferredoxin] + 2 S-adenosyl-L-methionine + 4 H(+) = [[Fe-S] cluster scaffold protein] + N(6)-[(R)-dihydrolipoyl]-L-lysyl-[protein] + 4 Fe(3+) + 2 hydrogen sulfide + 2 5'-deoxyadenosine + 2 L-methionine + 2 reduced [2Fe-2S]-[ferredoxin]. It functions in the pathway protein modification; protein lipoylation via endogenous pathway; protein N(6)-(lipoyl)lysine from octanoyl-[acyl-carrier-protein]: step 2/2. In terms of biological role, catalyzes the radical-mediated insertion of two sulfur atoms into the C-6 and C-8 positions of the octanoyl moiety bound to the lipoyl domains of lipoate-dependent enzymes, thereby converting the octanoylated domains into lipoylated derivatives. The protein is Lipoyl synthase of Vibrio parahaemolyticus serotype O3:K6 (strain RIMD 2210633).